Consider the following 622-residue polypeptide: Kinesin light chain 2 (622 aa).

Residues 78–143 (ILALSSHLGA…KQHLLFMSQI (66 aa)) adopt a coiled-coil conformation. Over residues 145 to 164 (KLDEDASPNEEKGDVPKDTL) the composition is skewed to basic and acidic residues. Positions 145 to 191 (KLDEDASPNEEKGDVPKDTLDDLFPNEDEQSPAPSPGGGDVSGQHGG) are disordered. 3 positions are modified to phosphoserine: Ser-151, Ser-175, and Ser-179. Residues 180–190 (PGGGDVSGQHG) show a composition bias toward gly residues. 5 TPR repeats span residues 198–231 (LRTL…LEKT), 240–273 (ATML…REKT), 282–315 (AATL…REKV), 324–357 (AKQL…YATR), and 366–399 (AKTK…AHEK). A Phosphoserine modification is found at Ser-445. One copy of the TPR 6 repeat lies at 449 to 482 (NTTLRSLGALYRRQGKLEAAHTLEDCASRNRKQG). Disordered regions lie at residues 476-548 (SRNR…SFGK) and 563-622 (KLQG…SLVG). The span at 493–509 (ELLKDGSGRRGDRRSSR) shows a compositional bias: basic and acidic residues. A phosphoserine mark is found at Ser-508 and Ser-521. Residues 538–547 (GSLRRSGSFG) are compositionally biased toward low complexity. 6 positions are modified to phosphoserine: Ser-581, Ser-582, Ser-589, Ser-608, Ser-610, and Ser-615. A compositionally biased stretch (low complexity) spans 601-622 (LSDSRTLSSSSMDLSRRSSLVG).

The protein belongs to the kinesin light chain family. Oligomeric complex composed of two heavy chains and two light chains. Interacts (via TPR repeats) with PLEKHM2.

It is found in the cytoplasm. It localises to the cytoskeleton. The protein localises to the lysosome membrane. In terms of biological role, kinesin is a microtubule-associated force-producing protein that plays a role in organelle transport. The light chain functions in coupling of cargo to the heavy chain or in the modulation of its ATPase activity. Through binding with PLEKHM2 and ARL8B, recruits kinesin-1 to lysosomes and hence direct lysosomes movement toward microtubule plus ends. The sequence is that of Kinesin light chain 2 from Homo sapiens (Human).